A 523-amino-acid polypeptide reads, in one-letter code: 2-isopropylmalate synthase (523 aa).

In terms of domain architecture, Pyruvate carboxyltransferase spans 5–267 (VIIFDTTLRD…HTNINHHEIW (263 aa)). Residues Asp-14, His-202, His-204, and Asn-238 each contribute to the Mn(2+) site. The regulatory domain stretch occupies residues 392-523 (RLDYFSVQSG…QNKENNKETV (132 aa)).

It belongs to the alpha-IPM synthase/homocitrate synthase family. LeuA type 1 subfamily. Homodimer. The cofactor is Mn(2+).

It localises to the cytoplasm. It carries out the reaction 3-methyl-2-oxobutanoate + acetyl-CoA + H2O = (2S)-2-isopropylmalate + CoA + H(+). The protein operates within amino-acid biosynthesis; L-leucine biosynthesis; L-leucine from 3-methyl-2-oxobutanoate: step 1/4. In terms of biological role, catalyzes the condensation of the acetyl group of acetyl-CoA with 3-methyl-2-oxobutanoate (2-ketoisovalerate) to form 3-carboxy-3-hydroxy-4-methylpentanoate (2-isopropylmalate). In Salmonella newport (strain SL254), this protein is 2-isopropylmalate synthase.